Here is a 141-residue protein sequence, read N- to C-terminus: Large ribosomal subunit protein uL11c (141 aa).

This sequence belongs to the universal ribosomal protein uL11 family. In terms of assembly, part of the ribosomal stalk of the 50S ribosomal subunit. Interacts with L10 and the large rRNA to form the base of the stalk. L10 forms an elongated spine to which L12 dimers bind in a sequential fashion forming a multimeric L10(L12)X complex.

It localises to the plastid. The protein resides in the chloroplast. Forms part of the ribosomal stalk which helps the ribosome interact with GTP-bound translation factors. The polypeptide is Large ribosomal subunit protein uL11c (Guillardia theta (Cryptophyte)).